Consider the following 162-residue polypeptide: uncharacterized protein (162 aa).

The next 5 membrane-spanning stretches (helical) occupy residues 15 to 40 (TIYS…YFLL), 47 to 66 (ISML…TTAL), 76 to 98 (YSIL…FLVY), 105 to 124 (KWLG…DPLL), and 128 to 150 (GYAV…WLVI).

Its subcellular location is the cell membrane. This is an uncharacterized protein from Archaeoglobus fulgidus (strain ATCC 49558 / DSM 4304 / JCM 9628 / NBRC 100126 / VC-16).